Here is a 1330-residue protein sequence, read N- to C-terminus: ESX-3 secretion system protein EccC3 (1330 aa).

2 helical membrane passes run 43 to 63 and 65 to 85; these read LPYL…ATGM and VISP…TALY. FtsK domains follow at residues 456–662, 811–1000, and 1090–1280; these read GEPL…SVSR, RDPL…RDSN, and LAPV…ADSG. ATP is bound by residues 479–486, 829–836, and 1107–1114; these read GMTGSGKS, GGPKSGKS, and GDARSGKT.

In terms of assembly, part of the ESX-3 / type VII secretion system (T7SS), which is composed of cytosolic and membrane components. The ESX-3 membrane complex is composed of EccB3, EccC3, EccD3 and EccE3.

Its subcellular location is the cell inner membrane. Its function is as follows. Part of the ESX-3 specialized secretion system, which is important for iron and zinc uptake or homeostasis. This chain is ESX-3 secretion system protein EccC3, found in Mycobacterium tuberculosis (strain CDC 1551 / Oshkosh).